The following is a 114-amino-acid chain: DNA-directed RNA polymerase subunit omega (114 aa).

Belongs to the RNA polymerase subunit omega family. As to quaternary structure, the RNAP catalytic core consists of 2 alpha, 1 beta, 1 beta' and 1 omega subunit. When a sigma factor is associated with the core the holoenzyme is formed, which can initiate transcription.

The enzyme catalyses RNA(n) + a ribonucleoside 5'-triphosphate = RNA(n+1) + diphosphate. In terms of biological role, promotes RNA polymerase assembly. Latches the N- and C-terminal regions of the beta' subunit thereby facilitating its interaction with the beta and alpha subunits. This is DNA-directed RNA polymerase subunit omega from Novosphingobium aromaticivorans (strain ATCC 700278 / DSM 12444 / CCUG 56034 / CIP 105152 / NBRC 16084 / F199).